The primary structure comprises 124 residues: Large ribosomal subunit protein bL20 (124 aa).

The protein belongs to the bacterial ribosomal protein bL20 family.

In terms of biological role, binds directly to 23S ribosomal RNA and is necessary for the in vitro assembly process of the 50S ribosomal subunit. It is not involved in the protein synthesizing functions of that subunit. This chain is Large ribosomal subunit protein bL20, found in Ehrlichia canis (strain Jake).